Here is a 304-residue protein sequence, read N- to C-terminus: Putative F-box/LRR-repeat protein 21 (304 aa).

The F-box domain maps to arginine 43–isoleucine 90. LRR repeat units lie at residues leucine 132–asparagine 159, threonine 173–serine 198, glycine 218–leucine 241, and alanine 243–lysine 268.

The sequence is that of Putative F-box/LRR-repeat protein 21 (FBL21) from Arabidopsis thaliana (Mouse-ear cress).